A 343-amino-acid chain; its full sequence is SH2 domain-containing adapter protein D (343 aa).

Residues 1–176 are disordered; the sequence is MAKWLRDYLN…PADEYDQPWE (176 aa). 2 stretches are compositionally biased toward basic and acidic residues: residues 29-40 and 73-82; these read DILRAYREQKDL and IKVEAADMAR. Residues 92 to 102 are compositionally biased toward acidic residues; it reads EEPEAETEYSD. Basic and acidic residues predominate over residues 160–176; it reads RPLEDERPADEYDQPWE. Positions 225-320 constitute an SH2 domain; that stretch reads WFHGPLSRAE…AEHLALLYPV (96 aa). The disordered stretch occupies residues 322–343; sequence SSQSSQGPCTLAAKPERGQGDP.

In terms of processing, tyrosine phosphorylated by ABL. Specifically expressed in brain.

May function as an adapter protein. This Mus musculus (Mouse) protein is SH2 domain-containing adapter protein D (Shd).